We begin with the raw amino-acid sequence, 277 residues long: 2-dehydro-3-deoxyphosphooctonate aldolase (277 aa).

It belongs to the KdsA family.

It is found in the cytoplasm. It carries out the reaction D-arabinose 5-phosphate + phosphoenolpyruvate + H2O = 3-deoxy-alpha-D-manno-2-octulosonate-8-phosphate + phosphate. Its pathway is carbohydrate biosynthesis; 3-deoxy-D-manno-octulosonate biosynthesis; 3-deoxy-D-manno-octulosonate from D-ribulose 5-phosphate: step 2/3. The protein operates within bacterial outer membrane biogenesis; lipopolysaccharide biosynthesis. This Syntrophotalea carbinolica (strain DSM 2380 / NBRC 103641 / GraBd1) (Pelobacter carbinolicus) protein is 2-dehydro-3-deoxyphosphooctonate aldolase.